The primary structure comprises 359 residues: Bergaptol O-methyltransferase (359 aa).

Residue His126 coordinates bergaptol. 5 residues coordinate S-adenosyl-L-homocysteine: Ser179, Gly203, Asp226, Asp246, and Lys260. His264 is a bergaptol binding site. The Proton acceptor role is filled by His264.

Belongs to the class I-like SAM-binding methyltransferase superfamily. Cation-independent O-methyltransferase family. COMT subfamily. Homodimer. Mostly expressed in roots and, to a lower extent, in stems and leaves.

The protein resides in the cytoplasm. It catalyses the reaction bergaptol + S-adenosyl-L-methionine = bergapten + S-adenosyl-L-homocysteine. The protein operates within aromatic compound metabolism. Its pathway is secondary metabolite biosynthesis. In terms of biological role, O-methyltransferase involved in the biosynthesis of furocoumarins natural products such as bergapten, a photosensitizer used for medical purpose such as treating psoriasis and vitiligo or facilitating resistance to microbial infection and other stresses. Catalyzes specifically the methylation of bergaptol. Not active on xanthotol, isoscopoletin, scopoletin and esculetin. This is Bergaptol O-methyltransferase from Kitagawia praeruptora (Peucedanum praeruptorum).